The sequence spans 993 residues: Nisin biosynthesis protein NisB (993 aa).

Residues Ala-838–Leu-851 form a helical membrane-spanning segment.

The protein to B.subtilis SpaB and S.epidermidis EpiB.

It is found in the cell membrane. Its function is as follows. Involved in the post-translational modification of the lantibiotic nisin. In Lactococcus lactis subsp. lactis (Streptococcus lactis), this protein is Nisin biosynthesis protein NisB (nisB).